The sequence spans 216 residues: Endo-1,4-beta-xylanase 1 (216 aa).

Residues 1–19 (MFLTSVVSLVVGAISCVSA) form the signal peptide. A GH11 domain is found at 29-216 (QMTPRNSCYG…SSGSASITVS (188 aa)). Glu-112 functions as the Nucleophile in the catalytic mechanism. The active-site Proton donor is Glu-203.

It belongs to the glycosyl hydrolase 11 (cellulase G) family.

It localises to the secreted. It catalyses the reaction Endohydrolysis of (1-&gt;4)-beta-D-xylosidic linkages in xylans.. The protein operates within glycan degradation; xylan degradation. Functionally, endo-1,4-beta-xylanase involved in the hydrolysis of xylan, a major structural heterogeneous polysaccharide found in plant biomass representing the second most abundant polysaccharide in the biosphere, after cellulose. This is Endo-1,4-beta-xylanase 1 (xyl1) from Claviceps purpurea (Ergot fungus).